Here is a 400-residue protein sequence, read N- to C-terminus: Ribosomal RNA dihydrouridine synthase (400 aa).

The FAD site is built by Ala-14, Asp-33, Asn-34, Arg-40, Gly-46, Asn-51, Val-131, Glu-367, and Phe-380.

The protein belongs to the BaiN/RdsA family. RdsA subfamily. It depends on FAD as a cofactor.

It carries out the reaction a 5,6-dihydrouridine in mRNA + NAD(+) = a uridine in mRNA + NADH + H(+). In terms of biological role, catalyzes the synthesis of 5,6-dihydrouridine (D) at position 2449 in 23S rRNA. Can use NADH as a source of reducing equivalents but not NADPH. In Escherichia coli (strain K12), this protein is Ribosomal RNA dihydrouridine synthase.